The sequence spans 365 residues: MNTQTPTVLDLVRQELRNFAGYSSARSVALTGDLWLNANESAWPNPADSHATMRRYPEPQPPKLRQMLAALYGCVPEQLLIGRGSDEGIDLLVRAVCEPGCDPVLVTPPVFGMYAVSAQLQNAPVIQVPLVDDAAGFHADVPAIITAAQTSRAKLVFLCSPSNPVGAAIPLQQIETILQTLAGTALVVVDEAYGEFSDVPSVVPLLARYPHLVVLRTLSKAHALAAVRIGSVIADAHLVAILRRCQAPYPLPTPCVSLAEQGLSAAALQVTAQRVAEIRAERERLGAALACLSGVRRVYPSQGNFLLVRFDDAEAALQALYAAGVVVRDQRAAPQLHDALRLTVGTPEQNTRLLAVLRDIQAVPA.

Position 220 is an N6-(pyridoxal phosphate)lysine (Lys220).

Belongs to the class-II pyridoxal-phosphate-dependent aminotransferase family. Histidinol-phosphate aminotransferase subfamily. As to quaternary structure, homodimer. Pyridoxal 5'-phosphate serves as cofactor.

It carries out the reaction L-histidinol phosphate + 2-oxoglutarate = 3-(imidazol-4-yl)-2-oxopropyl phosphate + L-glutamate. It functions in the pathway amino-acid biosynthesis; L-histidine biosynthesis; L-histidine from 5-phospho-alpha-D-ribose 1-diphosphate: step 7/9. The sequence is that of Histidinol-phosphate aminotransferase from Xylella fastidiosa (strain 9a5c).